We begin with the raw amino-acid sequence, 469 residues long: MNPNQKIITIGSVSLTIATICFLMQIAILVTTVTLHFKQYECDSPANKQVMPCEPIIIERNITEIVYLTNTTIEKEICPKLVEYRNWSKPQCKITGFAPFSKDNSIRLSAGGDIWVTREPYVSCDPGKCYQFALGQGTTLDNKHSNDTIHDRTPHRTLLMNELGVPFHLGTRQVCIAWSSSSCHDGKAWLHVCVTGYDKNATASFIYDGRLVDSIGSWSQNILRTQESECVCINGTCTVVMTDGSASGRADTKILFIEEGKIVHISPLSGSAQHVEECSCYPRYPGVRCICRDNWKGSNRPVVDINVKDYSIDSSYVCSGLVGDTPRNNDRSSSSYCRNPNNEKGTHGVKGWAFDDGNDVWMGRTISEDSRSGYETFKVIGGWSTPNSKLQINRQVIVDSDNRSGYSGIFSVEGKSCINRCFYVELIRGREQETRVWWTSNSIVVFCGTSGTYGTGSWPDGADINLMPI.

The Intravirion portion of the chain corresponds to 1–9; it reads MNPNQKIIT. A helical transmembrane segment spans residues 10–30; that stretch reads IGSVSLTIATICFLMQIAILV. Residues 11 to 33 are involved in apical transport and lipid raft association; sequence GSVSLTIATICFLMQIAILVTTV. Residues 31 to 469 lie on the Virion surface side of the membrane; it reads TTVTLHFKQY…DGADINLMPI (439 aa). Residues 36–88 are hypervariable stalk region; it reads HFKQYECDSPANKQVMPCEPIIIERNITEIVYLTNTTIEKEICPKLVEYRNWS. 3 N-linked (GlcNAc...) asparagine; by host glycosylation sites follow: asparagine 61, asparagine 70, and asparagine 86. Residues 91–469 are head of neuraminidase; it reads QCKITGFAPF…DGADINLMPI (379 aa). 8 disulfides stabilise this stretch: cysteine 92/cysteine 417, cysteine 124/cysteine 129, cysteine 183/cysteine 230, cysteine 232/cysteine 237, cysteine 278/cysteine 291, cysteine 280/cysteine 289, cysteine 318/cysteine 337, and cysteine 421/cysteine 447. Arginine 118 contacts substrate. An N-linked (GlcNAc...) asparagine; by host glycan is attached at asparagine 146. Aspartate 151 serves as the catalytic Proton donor/acceptor. Arginine 152 contacts substrate. N-linked (GlcNAc...) asparagine; by host glycosylation is found at asparagine 200 and asparagine 234. Residue 276–277 participates in substrate binding; that stretch reads EE. Residue arginine 292 participates in substrate binding. 3 residues coordinate Ca(2+): aspartate 293, glycine 297, and aspartate 324. Arginine 371 contacts substrate. The N-linked (GlcNAc...) asparagine; by host glycan is linked to asparagine 402. Residue tyrosine 406 is the Nucleophile of the active site.

This sequence belongs to the glycosyl hydrolase 34 family. Homotetramer. Ca(2+) is required as a cofactor. Post-translationally, N-glycosylated.

The protein localises to the virion membrane. Its subcellular location is the host apical cell membrane. The enzyme catalyses Hydrolysis of alpha-(2-&gt;3)-, alpha-(2-&gt;6)-, alpha-(2-&gt;8)- glycosidic linkages of terminal sialic acid residues in oligosaccharides, glycoproteins, glycolipids, colominic acid and synthetic substrates.. Its activity is regulated as follows. Inhibited by the neuraminidase inhibitors zanamivir (Relenza) and oseltamivir (Tamiflu). These drugs interfere with the release of progeny virus from infected cells and are effective against all influenza strains. Resistance to neuraminidase inhibitors is quite rare. Its function is as follows. Catalyzes the removal of terminal sialic acid residues from viral and cellular glycoconjugates. Cleaves off the terminal sialic acids on the glycosylated HA during virus budding to facilitate virus release. Additionally helps virus spread through the circulation by further removing sialic acids from the cell surface. These cleavages prevent self-aggregation and ensure the efficient spread of the progeny virus from cell to cell. Otherwise, infection would be limited to one round of replication. Described as a receptor-destroying enzyme because it cleaves a terminal sialic acid from the cellular receptors. May facilitate viral invasion of the upper airways by cleaving the sialic acid moieties on the mucin of the airway epithelial cells. Likely to plays a role in the budding process through its association with lipid rafts during intracellular transport. May additionally display a raft-association independent effect on budding. Plays a role in the determination of host range restriction on replication and virulence. Sialidase activity in late endosome/lysosome traffic seems to enhance virus replication. This Influenza A virus (strain A/Beijing/39/1975 H3N2) protein is Neuraminidase.